The chain runs to 241 residues: GTP cyclohydrolase 1 (241 aa).

Residues 1-11 (MEKPRGVRCTN) constitute a propeptide that is removed on maturation. A disordered region spans residues 1-58 (MEKPRGVRCTNGFPERELPRPGASRPAEKSRPPEAKGAQPADAWKAGRPRSEEDNELN). 2 positions are modified to phosphoserine: S51 and S72. C132, H135, and C203 together coordinate Zn(2+).

The protein belongs to the GTP cyclohydrolase I family. As to quaternary structure, toroid-shaped homodecamer, composed of two pentamers of five dimers. Interacts with AHSA1 and GCHFR/GFRP. In terms of processing, phosphorylated.

Its subcellular location is the cytoplasm. It is found in the nucleus. It catalyses the reaction GTP + H2O = 7,8-dihydroneopterin 3'-triphosphate + formate + H(+). The protein operates within cofactor biosynthesis; 7,8-dihydroneopterin triphosphate biosynthesis; 7,8-dihydroneopterin triphosphate from GTP: step 1/1. With respect to regulation, GTP shows a positive allosteric effect, and tetrahydrobiopterin inhibits the enzyme activity. Zinc is required for catalytic activity. Inhibited by Mg(2+). Its function is as follows. May positively regulate nitric oxide synthesis in endothelial cells. May be involved in dopamine synthesis. May modify pain sensitivity and persistence. This chain is GTP cyclohydrolase 1 (Gch1), found in Rattus norvegicus (Rat).